A 466-amino-acid chain; its full sequence is Dynein axonemal assembly factor 11 (466 aa).

LRR repeat units lie at residues 22–43, 45–66, 67–88, and 89–110; these read SLEE…DKWC, DLKI…SKLK, KLEY…EGCE, and ELAK…KNLQ. Residues 123–161 form the LRRCT domain; it reads NPCASFDHYREFVVATLPQLKWLDGKEIEPSERIKALQD. Residues 178 to 204 adopt a coiled-coil conformation; the sequence is LKRAKLKEEAQRKHQEEDKNEDKRSNA. A compositionally biased stretch (basic and acidic residues) spans 185-202; that stretch reads EEAQRKHQEEDKNEDKRS. 3 disordered regions span residues 185–206, 268–288, and 391–466; these read EEAQ…NAGF, MEKQ…VKPP, and AFKS…PPLI. Over residues 269-287 the composition is skewed to basic residues; the sequence is EKQRKKQEKLSEKKKKVKP. Residues 301-396 enclose the CS domain; it reads VNEPKIDFSL…GGQRAFKSMK (96 aa). Basic and acidic residues-rich tracts occupy residues 398 to 425 and 433 to 445; these read TSDR…KHSF and QEKK…RPEP. The segment covering 450–460 has biased composition (acidic residues); that stretch reads SEEDPTFEDNP.

The protein belongs to the tilB family. Interacts (via CS domain) with ZMYND10 (via C-terminus). As to expression, expressed predominantly in testis and in nasal epithelial cells.

Its subcellular location is the cytoplasm. The protein resides in the cell projection. It localises to the cilium. It is found in the dynein axonemal particle. The protein localises to the flagellum. Its function is as follows. Involved in dynein arm assembly, is important for expression and transporting outer dynein arm (ODA) proteins from the cytoplasm to the cilia. Acts as a crucial component in the formation and motility of spermatozoal flagella. This chain is Dynein axonemal assembly factor 11, found in Homo sapiens (Human).